A 476-amino-acid chain; its full sequence is Ribosomal protein uS12 methylthiotransferase RimO (476 aa).

Residues 7 to 123 enclose the MTTase N-terminal domain; it reads KSLYMMTLGC…IGDLLAAEAS (117 aa). Positions 16, 52, 86, 158, 162, and 165 each coordinate [4Fe-4S] cluster. In terms of domain architecture, Radical SAM core spans 144 to 373; it reads SMPKYTAYLK…MAIQKRINRE (230 aa). Residues 376 to 444 form the TRAM domain; sequence KKLVGKRLEV…DYDLVARVVE (69 aa). Over residues 445–459 the composition is skewed to basic and acidic residues; the sequence is RPDPKQREHTARDAH. The tract at residues 445–476 is disordered; the sequence is RPDPKQREHTARDAHPAPLPVAAMQRPAPRAE.

It belongs to the methylthiotransferase family. RimO subfamily. Requires [4Fe-4S] cluster as cofactor.

The protein localises to the cytoplasm. The enzyme catalyses L-aspartate(89)-[ribosomal protein uS12]-hydrogen + (sulfur carrier)-SH + AH2 + 2 S-adenosyl-L-methionine = 3-methylsulfanyl-L-aspartate(89)-[ribosomal protein uS12]-hydrogen + (sulfur carrier)-H + 5'-deoxyadenosine + L-methionine + A + S-adenosyl-L-homocysteine + 2 H(+). Catalyzes the methylthiolation of an aspartic acid residue of ribosomal protein uS12. The chain is Ribosomal protein uS12 methylthiotransferase RimO from Myxococcus xanthus (strain DK1622).